The chain runs to 173 residues: Flavodoxin 2 (173 aa).

A Flavodoxin-like domain is found at methionine 3–leucine 165.

It belongs to the flavodoxin family. It depends on FMN as a cofactor.

In terms of biological role, low-potential electron donor to a number of redox enzymes. In Escherichia coli O157:H7, this protein is Flavodoxin 2 (fldB).